Consider the following 240-residue polypeptide: Urease accessory protein UreF (240 aa).

The protein belongs to the UreF family. In terms of assembly, ureD, UreF and UreG form a complex that acts as a GTP-hydrolysis-dependent molecular chaperone, activating the urease apoprotein by helping to assemble the nickel containing metallocenter of UreC. The UreE protein probably delivers the nickel.

It is found in the cytoplasm. Its function is as follows. Required for maturation of urease via the functional incorporation of the urease nickel metallocenter. In Bradyrhizobium sp. (strain BTAi1 / ATCC BAA-1182), this protein is Urease accessory protein UreF.